We begin with the raw amino-acid sequence, 335 residues long: Zinc-type alcohol dehydrogenase-like protein SAV2186 (335 aa).

The protein belongs to the zinc-containing alcohol dehydrogenase family. Quinone oxidoreductase subfamily.

This chain is Zinc-type alcohol dehydrogenase-like protein SAV2186, found in Staphylococcus aureus (strain Mu50 / ATCC 700699).